The sequence spans 466 residues: Heat stress transcription factor A-5 (466 aa).

The DNA-binding element occupies 21-115 (PAPFLVKTYE…LLKNIHRRKP (95 aa)). The interval 125–191 (SSTDQERAVL…KLLNFLETAI (67 aa)) is hydrophobic repeat HR-A/B. The short motif at 198 to 217 (KNFGKKVEQLDISAYNKKRR) is the Bipartite nuclear localization signal element. 3 disordered regions span residues 215–248 (KRRL…GNIF), 272–300 (HSIQ…LTKR), and 422–466 (TERP…QLTL). The span at 218–233 (LPEVEQSKPPSEDSHL) shows a compositional bias: basic and acidic residues. An AHA motif is present at residues 414-423 (DVFWEQFLTE). 2 stretches are compositionally biased toward polar residues: residues 425–438 (PGSS…STYR) and 455–466 (LRNTKNIEQLTL). The Nuclear export signal signature appears at 461-466 (IEQLTL).

Belongs to the HSF family. Class A subfamily. As to quaternary structure, homotrimer. In terms of processing, exhibits temperature-dependent phosphorylation.

The protein resides in the cytoplasm. Its subcellular location is the nucleus. Transcriptional activator that specifically binds DNA sequence 5'-AGAAnnTTCT-3' known as heat shock promoter elements (HSE). This Arabidopsis thaliana (Mouse-ear cress) protein is Heat stress transcription factor A-5 (HSFA5).